A 694-amino-acid polypeptide reads, in one-letter code: Two-component response regulator ORR25 (694 aa).

The Response regulatory domain maps to 17 to 132 (RVLAVDDSPV…DIQNIWQHVW (116 aa)). Position 68 is a 4-aspartylphosphate (aspartate 68). An HTH myb-type domain is found at 183-242 (TLKRQRVVWTPELHRDFVIAVHELGVDRAVPRKILRMMKVDYMTRENIASHLQKYRLYLK). The H-T-H motif DNA-binding region spans 213–238 (PRKILRMMKVDYMTRENIASHLQKYR). Residues 326–349 (VGHGGSPGNNPVFQPLQNSSNARK) form a disordered region. A compositionally biased stretch (polar residues) spans 333–347 (GNNPVFQPLQNSSNA).

The protein belongs to the ARR family. Type-B subfamily. Post-translationally, two-component system major event consists of a His-to-Asp phosphorelay between a sensor histidine kinase (HK) and a response regulator (RR). In plants, the His-to-Asp phosphorelay involves an additional intermediate named Histidine-containing phosphotransfer protein (HPt). This multistep phosphorelay consists of a His-Asp-His-Asp sequential transfer of a phosphate group between first a His and an Asp of the HK protein, followed by the transfer to a conserved His of the HPt protein and finally the transfer to an Asp in the receiver domain of the RR protein.

The protein localises to the nucleus. Its function is as follows. Transcriptional activator that binds specific DNA sequence. Functions as a response regulator involved in His-to-Asp phosphorelay signal transduction system. Phosphorylation of the Asp residue in the receiver domain activates the ability of the protein to promote the transcription of target genes. May directly activate some type-A response regulators in response to cytokinins. The chain is Two-component response regulator ORR25 from Oryza sativa subsp. japonica (Rice).